The sequence spans 242 residues: Probable transcriptional regulatory protein BURPS1710b_1385 (242 aa).

Belongs to the TACO1 family.

The protein resides in the cytoplasm. In Burkholderia pseudomallei (strain 1710b), this protein is Probable transcriptional regulatory protein BURPS1710b_1385.